A 397-amino-acid chain; its full sequence is uncharacterized protein (397 aa).

The [4Fe-4S] cluster site is built by cysteine 47, cysteine 53, cysteine 56, and cysteine 131. Residues glutamine 235, phenylalanine 262, glutamate 282, and aspartate 328 each coordinate S-adenosyl-L-methionine. The active-site Nucleophile is the cysteine 354.

This sequence belongs to the class I-like SAM-binding methyltransferase superfamily. RNA M5U methyltransferase family.

This is an uncharacterized protein from Zymomonas mobilis subsp. mobilis (strain ATCC 31821 / ZM4 / CP4).